A 247-amino-acid polypeptide reads, in one-letter code: Adenosine 5'-phosphosulfate reductase (247 aa).

[4Fe-4S] cluster contacts are provided by Cys-133, Cys-134, Cys-216, and Cys-219. The tract at residues 222 to 247 is disordered; that stretch reads KPAPGSDPRSGRWAGASKTECGLHAS. The active-site Nucleophile; cysteine thiosulfonate intermediate is Cys-242.

The protein belongs to the PAPS reductase family. CysH subfamily. The cofactor is [4Fe-4S] cluster.

Its subcellular location is the cytoplasm. It carries out the reaction [thioredoxin]-disulfide + sulfite + AMP + 2 H(+) = adenosine 5'-phosphosulfate + [thioredoxin]-dithiol. The protein operates within sulfur metabolism; hydrogen sulfide biosynthesis; sulfite from sulfate. Functionally, catalyzes the formation of sulfite from adenosine 5'-phosphosulfate (APS) using thioredoxin as an electron donor. The protein is Adenosine 5'-phosphosulfate reductase of Rhodococcus erythropolis (strain PR4 / NBRC 100887).